Here is a 479-residue protein sequence, read N- to C-terminus: Sulfate adenylyltransferase subunit 1 (479 aa).

A tr-type G domain is found at 25-239 (KSLLRFLTCG…EVLETVDIQR (215 aa)). Positions 34–41 (GSVDDGKS) are G1. 34-41 (GSVDDGKS) contributes to the GTP binding site. Residues 92–96 (GITID) are G2. The interval 113-116 (DTPG) is G3. Residues 113–117 (DTPGH) and 168–171 (NKMD) each bind GTP. The G4 stretch occupies residues 168 to 171 (NKMD). The tract at residues 206–208 (SAL) is G5.

It belongs to the TRAFAC class translation factor GTPase superfamily. Classic translation factor GTPase family. CysN/NodQ subfamily. Heterodimer composed of CysD, the smaller subunit, and CysN.

The catalysed reaction is sulfate + ATP + H(+) = adenosine 5'-phosphosulfate + diphosphate. The protein operates within sulfur metabolism; hydrogen sulfide biosynthesis; sulfite from sulfate: step 1/3. Its function is as follows. With CysD forms the ATP sulfurylase (ATPS) that catalyzes the adenylation of sulfate producing adenosine 5'-phosphosulfate (APS) and diphosphate, the first enzymatic step in sulfur assimilation pathway. APS synthesis involves the formation of a high-energy phosphoric-sulfuric acid anhydride bond driven by GTP hydrolysis by CysN coupled to ATP hydrolysis by CysD. The protein is Sulfate adenylyltransferase subunit 1 of Salmonella paratyphi A (strain ATCC 9150 / SARB42).